A 160-amino-acid chain; its full sequence is MATQKKPDLSDPQLRAKLAKGMGHNYYGEPAWPNDLLYVFPIVIMGSFAAIVALAVLDPAMTGEPANPFATPLEILPEWYLYPVFQILRSLPNKLLGVLAMGSVPVGLILVPFIENVNKFQNPFRRPVATTVFLVGTLVTVWLGIGAALPLDKSLTLGLF.

The next 3 membrane-spanning stretches (helical) occupy residues 36–56, 95–115, and 131–151; these read LLYV…ALAV, LLGV…PFIE, and TVFL…ALPL.

The protein belongs to the cytochrome b family. PetD subfamily. In terms of assembly, the 4 large subunits of the cytochrome b6-f complex are cytochrome b6, subunit IV (17 kDa polypeptide, PetD), cytochrome f and the Rieske protein, while the 4 small subunits are PetG, PetL, PetM and PetN. The complex functions as a dimer.

Its subcellular location is the cellular thylakoid membrane. Its function is as follows. Component of the cytochrome b6-f complex, which mediates electron transfer between photosystem II (PSII) and photosystem I (PSI), cyclic electron flow around PSI, and state transitions. The chain is Cytochrome b6-f complex subunit 4 from Nostoc punctiforme (strain ATCC 29133 / PCC 73102).